Consider the following 767-residue polypeptide: Phosphoribosylformylglycinamidine synthase subunit PurL (767 aa).

His46 is an active-site residue. Tyr49 and Lys88 together coordinate ATP. Mg(2+) is bound at residue Glu90. Residues Ser91–His94 and Arg113 contribute to the substrate site. Residue His92 is the Proton acceptor of the active site. Asp114 is a Mg(2+) binding site. Gln237 is a binding site for substrate. Position 265 (Asp265) interacts with Mg(2+). Substrate is bound at residue Glu309–Gln311. ATP contacts are provided by Asp498 and Gly535. Asn536 contacts Mg(2+). Ser538 lines the substrate pocket.

This sequence belongs to the FGAMS family. Monomer. Part of the FGAM synthase complex composed of 1 PurL, 1 PurQ and 2 PurS subunits.

The protein localises to the cytoplasm. It catalyses the reaction N(2)-formyl-N(1)-(5-phospho-beta-D-ribosyl)glycinamide + L-glutamine + ATP + H2O = 2-formamido-N(1)-(5-O-phospho-beta-D-ribosyl)acetamidine + L-glutamate + ADP + phosphate + H(+). Its pathway is purine metabolism; IMP biosynthesis via de novo pathway; 5-amino-1-(5-phospho-D-ribosyl)imidazole from N(2)-formyl-N(1)-(5-phospho-D-ribosyl)glycinamide: step 1/2. Functionally, part of the phosphoribosylformylglycinamidine synthase complex involved in the purines biosynthetic pathway. Catalyzes the ATP-dependent conversion of formylglycinamide ribonucleotide (FGAR) and glutamine to yield formylglycinamidine ribonucleotide (FGAM) and glutamate. The FGAM synthase complex is composed of three subunits. PurQ produces an ammonia molecule by converting glutamine to glutamate. PurL transfers the ammonia molecule to FGAR to form FGAM in an ATP-dependent manner. PurS interacts with PurQ and PurL and is thought to assist in the transfer of the ammonia molecule from PurQ to PurL. The sequence is that of Phosphoribosylformylglycinamidine synthase subunit PurL from Anaeromyxobacter sp. (strain Fw109-5).